We begin with the raw amino-acid sequence, 1245 residues long: Trafficking protein particle complex II-specific subunit 130 homolog (1245 aa).

2 disordered regions span residues 488–524 (GDGS…TSLP) and 884–903 (HVGG…TRKV). 2 stretches are compositionally biased toward low complexity: residues 495–507 (ANSK…SASN) and 888–898 (TDASKTSSSST).

This sequence belongs to the TMEM1 family. In terms of assembly, part of the multisubunit TRAPP (transport protein particle) II complex composed of BET3, BET5, TRS20, TRS23, TRS31, TRS33, TRS65, TRS85, TRS120 and TRS130.

Its subcellular location is the golgi apparatus. It localises to the trans-Golgi network. It is found in the early endosome. Its function is as follows. Specific subunit of the TRAPP II complex, a highly conserved vesicle tethering complex that is required for the proper transport of proteins in post-Golgi trafficking pathways to the growing cell plate in mitotic active cells. This is Trafficking protein particle complex II-specific subunit 130 homolog from Oryza sativa subsp. japonica (Rice).